A 244-amino-acid chain; its full sequence is Triosephosphate isomerase (244 aa).

9 to 11 (NWK) lines the substrate pocket. Catalysis depends on His-93, which acts as the Electrophile. The active-site Proton acceptor is Glu-160. The substrate site is built by Gly-166 and Ser-206.

It belongs to the triosephosphate isomerase family. In terms of assembly, homodimer.

It is found in the cytoplasm. It catalyses the reaction D-glyceraldehyde 3-phosphate = dihydroxyacetone phosphate. It participates in carbohydrate biosynthesis; gluconeogenesis. The protein operates within carbohydrate degradation; glycolysis; D-glyceraldehyde 3-phosphate from glycerone phosphate: step 1/1. Involved in the gluconeogenesis. Catalyzes stereospecifically the conversion of dihydroxyacetone phosphate (DHAP) to D-glyceraldehyde-3-phosphate (G3P). The sequence is that of Triosephosphate isomerase from Mycoplasma pneumoniae (strain ATCC 29342 / M129 / Subtype 1) (Mycoplasmoides pneumoniae).